The chain runs to 518 residues: Alpha-ionylideneethane synthase abl3 (518 aa).

Disordered regions lie at residues 294 to 355 (AAPG…SVFE) and 440 to 466 (KAPP…QRSK). Positions 299–339 (TSSDNSSDNRSSSISSTSSTGTDGSGAGDASSVHSSGVHSD) are enriched in low complexity.

It belongs to the alpha-ionylideneethane synthase family.

Its pathway is hormone biosynthesis. Its function is as follows. Alpha-ionylideneethane synthase involved in the biosynthesis of abscisic acid (ABA), a phytohormone that acts antagonistically toward salicylic acid (SA), jasmonic acid (JA) and ethylene (ETH) signaling, to impede plant defense responses. During pathogen-host interaction, ABA plays a dual role in disease severity by increasing plant susceptibility and accelerating pathogenesis in the fungus itself. The first step of the pathway catalyzes the reaction from farnesyl diphosphate to alpha-ionylideneethane performed by the alpha-ionylideneethane synthase ABA3 via a three-step reaction mechanism involving 2 neutral intermediates, beta-farnesene and allofarnesene. The cytochrome P450 monooxygenase ABA1 might then be involved in the conversion of alpha-ionylideneethane to alpha-ionylideneacetic acid. Alpha-ionylideneacetic acid is further converted to abscisic acid in 2 steps involving the cytochrome P450 monooxygenase ABA2 and the short-chain dehydrogenase/reductase ABA4, via the intermediates 1'-deoxy-ABA or 1',4'-trans-diol-ABA, depending on the order of action of these 2 enzymes. ABA2 is responsible for the hydroxylation of carbon atom C-1' and ABA4 might be involved in the oxidation of the C-4' carbon atom. This is Alpha-ionylideneethane synthase abl3 from Pyricularia oryzae (strain Y34) (Rice blast fungus).